A 630-amino-acid chain; its full sequence is Polyphenol oxidase A, chloroplastic (630 aa).

Residues 1-25 (MASLCSNSSSTSLKTPFTSSTTCLS) form a disordered region. The N-terminal 87 residues, 1–87 (MASLCSNSSS…ANAIPLAASA (87 aa)), are a transit peptide targeting the chloroplast. Intrachain disulfides connect C98/C114 and C113/C181. H180, H198, H207, H328, H332, and H370 together coordinate Cu cation. The 2'-(S-cysteinyl)-histidine (Cys-His) cross-link spans 184 to 198 (CNGGYSIDGKVLQVH).

Belongs to the tyrosinase family. Requires Cu(2+) as cofactor.

It localises to the plastid. The protein resides in the chloroplast thylakoid lumen. It catalyses the reaction 2 catechol + O2 = 2 1,2-benzoquinone + 2 H2O. Functionally, catalyzes the oxidation of mono- and o-diphenols to o-diquinones. This Solanum lycopersicum (Tomato) protein is Polyphenol oxidase A, chloroplastic.